A 294-amino-acid chain; its full sequence is N-acetylmuramic acid 6-phosphate etherase (294 aa).

In terms of domain architecture, SIS spans 54 to 217 (TIHSFKSNGR…STASMIGVGK (164 aa)). Residue E82 is the Proton donor of the active site. E113 is a catalytic residue.

It belongs to the GCKR-like family. MurNAc-6-P etherase subfamily. In terms of assembly, homodimer.

It catalyses the reaction N-acetyl-D-muramate 6-phosphate + H2O = N-acetyl-D-glucosamine 6-phosphate + (R)-lactate. It functions in the pathway amino-sugar metabolism; N-acetylmuramate degradation. Functionally, specifically catalyzes the cleavage of the D-lactyl ether substituent of MurNAc 6-phosphate, producing GlcNAc 6-phosphate and D-lactate. The polypeptide is N-acetylmuramic acid 6-phosphate etherase (Oceanobacillus iheyensis (strain DSM 14371 / CIP 107618 / JCM 11309 / KCTC 3954 / HTE831)).